Reading from the N-terminus, the 506-residue chain is MFSLQDICRKHLFLLPSSFNEYILQVLGLYWEKHGSLQRIRKDAVFVQRNITLSTNEALRIAASEGNERVVKLLLSWEGNFHYVIIGALEGDQYDLIHKYNSQIKDYHVILSSIQNANTFEKCHQLYNCTMWRLVQNAIKYNMLSILQKHRNLLTDEGDNQELFEKACEEQKYDIVLWIGQTLMLDEPKSIFDIALERIDFSLLIMGYSLLFANKMSSIDIHDEEDLTSLLTEHLEKAATKGCLFFMQETLKHGGNVNIAVLSKAVEYNHRKILDYFIRRQKCLSRKDIEKLLLIAIKDGGSKKTLNLLLSYLNYSVQNMIGKIVEAVINDGDFTIIIILKKKKINLVDSVLAGFLDHFHTYCFIKVFIHEFAIRPEKIIKMAARKDKLDIIIEFFNDIYPHKDDLGTILNILKNIVNTMKHKEGKEVLIGLIHKIYRIIHLENKEMFNLVRFYIMHNANIQFISICKDCFNLAGFKPFLSECLDIAIKKNYPDIVRNIKIQLKYE.

The protein belongs to the asfivirus MGF 505 family.

Its function is as follows. Plays a role in virus cell tropism, and may be required for efficient virus replication in macrophages. In Ornithodoros (relapsing fever ticks), this protein is Protein MGF 505-4R.